Here is a 92-residue protein sequence, read N- to C-terminus: Acylphosphatase (92 aa).

An Acylphosphatase-like domain is found at 6–92; the sequence is RAHVYVSGRV…EGVDGFEIRR (87 aa). Catalysis depends on residues Arg-21 and Asn-39.

Belongs to the acylphosphatase family.

It catalyses the reaction an acyl phosphate + H2O = a carboxylate + phosphate + H(+). In Natronomonas pharaonis (strain ATCC 35678 / DSM 2160 / CIP 103997 / JCM 8858 / NBRC 14720 / NCIMB 2260 / Gabara) (Halobacterium pharaonis), this protein is Acylphosphatase (acyP).